Consider the following 255-residue polypeptide: Diphthine synthase (255 aa).

Residues leucine 9, aspartate 85, valine 88, 113 to 114, leucine 164, alanine 207, and histidine 232 each bind S-adenosyl-L-methionine; that span reads SI.

This sequence belongs to the diphthine synthase family. In terms of assembly, homodimer.

It carries out the reaction 2-[(3S)-amino-3-carboxypropyl]-L-histidyl-[translation elongation factor 2] + 3 S-adenosyl-L-methionine = diphthine-[translation elongation factor 2] + 3 S-adenosyl-L-homocysteine + 3 H(+). The protein operates within protein modification; peptidyl-diphthamide biosynthesis. S-adenosyl-L-methionine-dependent methyltransferase that catalyzes the trimethylation of the amino group of the modified target histidine residue in translation elongation factor 2 (EF-2), to form an intermediate called diphthine. The three successive methylation reactions represent the second step of diphthamide biosynthesis. The sequence is that of Diphthine synthase from Methanococcus vannielii (strain ATCC 35089 / DSM 1224 / JCM 13029 / OCM 148 / SB).